The following is a 371-amino-acid chain: Aspartate-semialdehyde dehydrogenase (371 aa).

NADP(+) contacts are provided by residues 9–12, 37–38, and glutamine 73; these read RGMV and TS. Arginine 102 contacts phosphate. The active-site Acyl-thioester intermediate is the cysteine 135. A substrate-binding site is contributed by glutamine 162. Residues 165–166 and proline 193 each bind NADP(+); that span reads SG. Glutamate 241 lines the substrate pocket. Position 244 (lysine 244) interacts with phosphate. Substrate is bound at residue arginine 268. The active-site Proton acceptor is the histidine 275. An NADP(+)-binding site is contributed by glutamine 351.

The protein belongs to the aspartate-semialdehyde dehydrogenase family. As to quaternary structure, homodimer.

The enzyme catalyses L-aspartate 4-semialdehyde + phosphate + NADP(+) = 4-phospho-L-aspartate + NADPH + H(+). Its pathway is amino-acid biosynthesis; L-lysine biosynthesis via DAP pathway; (S)-tetrahydrodipicolinate from L-aspartate: step 2/4. It participates in amino-acid biosynthesis; L-methionine biosynthesis via de novo pathway; L-homoserine from L-aspartate: step 2/3. The protein operates within amino-acid biosynthesis; L-threonine biosynthesis; L-threonine from L-aspartate: step 2/5. Its function is as follows. Catalyzes the NADPH-dependent formation of L-aspartate-semialdehyde (L-ASA) by the reductive dephosphorylation of L-aspartyl-4-phosphate. The protein is Aspartate-semialdehyde dehydrogenase of Neisseria meningitidis serogroup B (strain ATCC BAA-335 / MC58).